We begin with the raw amino-acid sequence, 339 residues long: Biotin synthase (339 aa).

One can recognise a Radical SAM core domain in the interval 53 to 271 (NAIQMSRLLS…IALARILMPR (219 aa)). [4Fe-4S] cluster-binding residues include C68, C72, and C75. C112, C143, C203, and R275 together coordinate [2Fe-2S] cluster.

This sequence belongs to the radical SAM superfamily. Biotin synthase family. Homodimer. [4Fe-4S] cluster is required as a cofactor. [2Fe-2S] cluster serves as cofactor.

It carries out the reaction (4R,5S)-dethiobiotin + (sulfur carrier)-SH + 2 reduced [2Fe-2S]-[ferredoxin] + 2 S-adenosyl-L-methionine = (sulfur carrier)-H + biotin + 2 5'-deoxyadenosine + 2 L-methionine + 2 oxidized [2Fe-2S]-[ferredoxin]. It functions in the pathway cofactor biosynthesis; biotin biosynthesis; biotin from 7,8-diaminononanoate: step 2/2. In terms of biological role, catalyzes the conversion of dethiobiotin (DTB) to biotin by the insertion of a sulfur atom into dethiobiotin via a radical-based mechanism. The polypeptide is Biotin synthase (Agrobacterium fabrum (strain C58 / ATCC 33970) (Agrobacterium tumefaciens (strain C58))).